Here is a 273-residue protein sequence, read N- to C-terminus: 4-diphosphocytidyl-2-C-methyl-D-erythritol kinase (273 aa).

Residue Lys9 is part of the active site. Residue 90–100 coordinates ATP; that stretch reads PVAAGLGGGSA. Asp129 is a catalytic residue.

The protein belongs to the GHMP kinase family. IspE subfamily.

The catalysed reaction is 4-CDP-2-C-methyl-D-erythritol + ATP = 4-CDP-2-C-methyl-D-erythritol 2-phosphate + ADP + H(+). It functions in the pathway isoprenoid biosynthesis; isopentenyl diphosphate biosynthesis via DXP pathway; isopentenyl diphosphate from 1-deoxy-D-xylulose 5-phosphate: step 3/6. In terms of biological role, catalyzes the phosphorylation of the position 2 hydroxy group of 4-diphosphocytidyl-2C-methyl-D-erythritol. This chain is 4-diphosphocytidyl-2-C-methyl-D-erythritol kinase, found in Erythrobacter litoralis (strain HTCC2594).